The sequence spans 194 residues: Orotate phosphoribosyltransferase (194 aa).

117 to 125 (EDVVTTGLS) contributes to the 5-phospho-alpha-D-ribose 1-diphosphate binding site. Orotate contacts are provided by threonine 121 and arginine 149.

This sequence belongs to the purine/pyrimidine phosphoribosyltransferase family. PyrE subfamily. As to quaternary structure, homodimer. Requires Mg(2+) as cofactor.

The enzyme catalyses orotidine 5'-phosphate + diphosphate = orotate + 5-phospho-alpha-D-ribose 1-diphosphate. Its pathway is pyrimidine metabolism; UMP biosynthesis via de novo pathway; UMP from orotate: step 1/2. Its function is as follows. Catalyzes the transfer of a ribosyl phosphate group from 5-phosphoribose 1-diphosphate to orotate, leading to the formation of orotidine monophosphate (OMP). This is Orotate phosphoribosyltransferase from Novosphingobium aromaticivorans (strain ATCC 700278 / DSM 12444 / CCUG 56034 / CIP 105152 / NBRC 16084 / F199).